The sequence spans 427 residues: Trigger factor (427 aa).

The region spanning 163 to 248 (GDTVVIDFVG…IHEVKTKEVP (86 aa)) is the PPIase FKBP-type domain.

The protein belongs to the FKBP-type PPIase family. Tig subfamily.

Its subcellular location is the cytoplasm. The enzyme catalyses [protein]-peptidylproline (omega=180) = [protein]-peptidylproline (omega=0). Its function is as follows. Involved in protein export. Acts as a chaperone by maintaining the newly synthesized protein in an open conformation. Functions as a peptidyl-prolyl cis-trans isomerase. In Streptococcus agalactiae serotype III (strain NEM316), this protein is Trigger factor.